A 59-amino-acid polypeptide reads, in one-letter code: Arabinogalactan protein 13 (59 aa).

A signal peptide spans 1 to 27; that stretch reads MEAMKMRLFVAVLVAAMAFSAVQQAAA. Residues Pro31, Pro33, and Pro35 each carry the 4-hydroxyproline modification. Pro31, Pro33, and Pro35 each carry an O-linked (Ara...) hydroxyproline glycan. Ser37 carries the GPI-anchor amidated serine lipid modification. Positions 38–59 are cleaved as a propeptide — removed in mature form; it reads DASLAIPAFFASVATLAFGFLF.

It belongs to the AG-peptide AGP family. In terms of processing, contains 4-hydroxyproline; hydroxylated on Pro-31, Pro-33 and Pro-35. O-glycosylated on hydroxyprolines; noncontiguous hydroxylproline residues are glycosylated with arabinogalactan.

The protein localises to the cell membrane. In terms of biological role, proteoglycan that seems to be implicated in diverse developmental roles such as differentiation, cell-cell recognition, embryogenesis and programmed cell death. This chain is Arabinogalactan protein 13, found in Arabidopsis thaliana (Mouse-ear cress).